A 158-amino-acid polypeptide reads, in one-letter code: MTADTEPVTIGALTRADAQRCAELEAQLFVGDDPWPPAAFNRELASPHNHYVGARSGGTLVGYAGISRLGRTPPFEYEVHTIGVDPAYQGRGIGRRLLRELLDFARGGVVYLEVRTDNDAALALYRSVGFQRVGLRRRYYRVSGADAYTMRRDSGDPS.

An N-acetyltransferase domain is found at 8–155 (VTIGALTRAD…DAYTMRRDSG (148 aa)).

It belongs to the acetyltransferase family. RimI subfamily. Monomer. Interacts with TsaD. Interacts with GroS/GroES.

The enzyme catalyses N-terminal L-methionyl-L-alanyl-[protein] + acetyl-CoA = N-terminal N(alpha)-acetyl-L-methionyl-L-alanyl-[protein] + CoA + H(+). It carries out the reaction N-terminal L-methionyl-L-seryl-[protein] + acetyl-CoA = N-terminal N(alpha)-acetyl-L-methionyl-L-seryl-[protein] + CoA + H(+). The catalysed reaction is N-terminal L-methionyl-L-valyl-[protein] + acetyl-CoA = N-terminal N(alpha)-acetyl-L-methionyl-L-valyl-[protein] + CoA + H(+). It catalyses the reaction N-terminal L-methionyl-L-threonyl-[protein] + acetyl-CoA = N-terminal N(alpha)-acetyl-L-methionyl-L-threonyl-[protein] + CoA + H(+). The enzyme catalyses N-terminal L-methionyl-L-lysyl-[protein] + acetyl-CoA = N-terminal N(alpha)-acetyl-L-methionyl-L-lysyl-[protein] + CoA + H(+). It carries out the reaction N-terminal L-methionyl-L-leucyl-[protein] + acetyl-CoA = N-terminal N(alpha)-acetyl-L-methionyl-L-leucyl-[protein] + CoA + H(+). The catalysed reaction is N-terminal L-methionyl-L-phenylalanyl-[protein] + acetyl-CoA = N-terminal N(alpha)-acetyl-L-methionyl-L-phenylalanyl-[protein] + CoA + H(+). It catalyses the reaction N-terminal L-methionyl-L-tyrosyl-[protein] + acetyl-CoA = N-terminal N(alpha)-acetyl-L-methionyl-L-tyrosyl-[protein] + CoA + H(+). The enzyme catalyses N-terminal glycyl-[protein] + acetyl-CoA = N-terminal N(alpha)-acetylglycyl-[protein] + CoA + H(+). It carries out the reaction N-terminal L-alanyl-[protein] + acetyl-CoA = N-terminal N(alpha)-acetyl-L-alanyl-[protein] + CoA + H(+). The catalysed reaction is N-terminal L-seryl-[protein] + acetyl-CoA = N-terminal N(alpha)-acetyl-L-seryl-[protein] + CoA + H(+). It catalyses the reaction N-terminal L-valyl-[protein] + acetyl-CoA = N-terminal N(alpha)-acetyl-L-valyl-[protein] + CoA + H(+). The enzyme catalyses N-terminal L-cysteinyl-[protein] + acetyl-CoA = N-terminal N(alpha)-acetyl-L-cysteinyl-[protein] + CoA + H(+). It carries out the reaction N-terminal L-threonyl-[protein] + acetyl-CoA = N-terminal N(alpha)-acetyl-L-threonyl-[protein] + CoA + H(+). In terms of biological role, N-alpha-acetyltransferase that specifically mediates the acetylation of N-terminal residues. Able to mediate acetylation of a wide variety of N-terminal residues, with preference for hydrophobic N-termini. Acetylates GroS/GroES and GroEL1. Able to acetylate the ribosomal protein bS18, but it is unclear whether it acetylates its N-terminal alanine residue. This Mycobacterium tuberculosis (strain ATCC 25618 / H37Rv) protein is N-alpha-acetyltransferase RimI.